A 209-amino-acid polypeptide reads, in one-letter code: uncharacterized protein (209 aa).

This is an uncharacterized protein from Magallana gigas (Pacific oyster).